The primary structure comprises 311 residues: Acetaldehyde dehydrogenase 2 (311 aa).

11–14 lines the NAD(+) pocket; the sequence is SGNI. C131 functions as the Acyl-thioester intermediate in the catalytic mechanism. Residues 162–170 and N289 contribute to the NAD(+) site; that span reads SAGPGTRAN.

The protein belongs to the acetaldehyde dehydrogenase family.

The catalysed reaction is acetaldehyde + NAD(+) + CoA = acetyl-CoA + NADH + H(+). The chain is Acetaldehyde dehydrogenase 2 (mhpF) from Azotobacter vinelandii (strain DJ / ATCC BAA-1303).